Consider the following 220-residue polypeptide: Elongation factor Ts (220 aa).

Residues 83 to 86 (TDFV) are involved in Mg(2+) ion dislocation from EF-Tu.

It belongs to the EF-Ts family.

It is found in the cytoplasm. In terms of biological role, associates with the EF-Tu.GDP complex and induces the exchange of GDP to GTP. It remains bound to the aminoacyl-tRNA.EF-Tu.GTP complex up to the GTP hydrolysis stage on the ribosome. The polypeptide is Elongation factor Ts (Synechococcus sp. (strain CC9605)).